The chain runs to 813 residues: Protein translocase subunit SecA 2 (813 aa).

ATP-binding positions include Gln-105, 123-127 (GEGKT), and Asp-525.

It belongs to the SecA family. In terms of assembly, monomer and homodimer. Part of the essential Sec protein translocation apparatus which comprises SecA, SecYEG and auxiliary proteins SecDF-YajC and YidC.

Its subcellular location is the cell inner membrane. It localises to the cytoplasm. It carries out the reaction ATP + H2O + cellular proteinSide 1 = ADP + phosphate + cellular proteinSide 2.. Functionally, part of the Sec protein translocase complex. Interacts with the SecYEG preprotein conducting channel. Has a central role in coupling the hydrolysis of ATP to the transfer of proteins into and across the cell membrane, serving both as a receptor for the preprotein-SecB complex and as an ATP-driven molecular motor driving the stepwise translocation of polypeptide chains across the membrane. This chain is Protein translocase subunit SecA 2, found in Rhodopseudomonas palustris (strain BisA53).